Here is a 217-residue protein sequence, read N- to C-terminus: MAHSIWHEKIKSFLPEHYYGRINHFLDEAYASGLVYPQRENVFKALQVTPLEETKVLILGQDPYHGPKQAQGLSFSVPEEISAPPSLINILKELADDIGPRDHHDLSTWASQGVLLLNACLTVPAGQANGHAGLIWEPFTDAVIKVLNEKDSPVVFILWGAYARKKKAFITNPKHHIIESPHPSPLSSYRGFFGSKPFSRTNAILEKEGMTGVDWLK.

D62 functions as the Proton acceptor in the catalytic mechanism.

This sequence belongs to the uracil-DNA glycosylase (UDG) superfamily. UNG family.

The protein resides in the cytoplasm. It catalyses the reaction Hydrolyzes single-stranded DNA or mismatched double-stranded DNA and polynucleotides, releasing free uracil.. In terms of biological role, excises uracil residues from the DNA which can arise as a result of misincorporation of dUMP residues by DNA polymerase or due to deamination of cytosine. This Streptococcus pyogenes serotype M3 (strain ATCC BAA-595 / MGAS315) protein is Uracil-DNA glycosylase.